Reading from the N-terminus, the 277-residue chain is Diaminopimelate epimerase (277 aa).

Positions 13, 46, and 66 each coordinate substrate. C75 acts as the Proton donor in catalysis. Residues 76-77 (GN), N160, N193, and 211-212 (ER) each bind substrate. C220 acts as the Proton acceptor in catalysis. 221-222 (GS) is a substrate binding site.

The protein belongs to the diaminopimelate epimerase family. As to quaternary structure, homodimer.

It is found in the cytoplasm. The enzyme catalyses (2S,6S)-2,6-diaminopimelate = meso-2,6-diaminopimelate. It participates in amino-acid biosynthesis; L-lysine biosynthesis via DAP pathway; DL-2,6-diaminopimelate from LL-2,6-diaminopimelate: step 1/1. Its function is as follows. Catalyzes the stereoinversion of LL-2,6-diaminopimelate (L,L-DAP) to meso-diaminopimelate (meso-DAP), a precursor of L-lysine and an essential component of the bacterial peptidoglycan. This Legionella pneumophila (strain Corby) protein is Diaminopimelate epimerase.